A 605-amino-acid chain; its full sequence is DNA mismatch repair protein MutL (605 aa).

The protein belongs to the DNA mismatch repair MutL/HexB family.

In terms of biological role, this protein is involved in the repair of mismatches in DNA. It is required for dam-dependent methyl-directed DNA mismatch repair. May act as a 'molecular matchmaker', a protein that promotes the formation of a stable complex between two or more DNA-binding proteins in an ATP-dependent manner without itself being part of a final effector complex. This chain is DNA mismatch repair protein MutL, found in Exiguobacterium sp. (strain ATCC BAA-1283 / AT1b).